The following is a 202-amino-acid chain: Peptide methionine sulfoxide reductase B1, chloroplastic (202 aa).

The transit peptide at 1–63 (MASSTRLTII…SSSPKPDNVQ (63 aa)) directs the protein to the chloroplast. The segment at 48 to 67 (YSMGSSSSSPKPDNVQEAEK) is disordered. One can recognise a MsrB domain in the interval 75–197 (ENEWKKRLTP…NSAALKLNAL (123 aa)). Zn(2+) contacts are provided by C114, C117, C163, and C166. C186 serves as the catalytic Nucleophile.

The protein belongs to the MsrB Met sulfoxide reductase family. Zn(2+) is required as a cofactor. As to expression, expressed at low levels in stems, leaves, floral buds, flowers and siliques (at protein level).

The protein localises to the plastid. The protein resides in the chloroplast. It carries out the reaction L-methionyl-[protein] + [thioredoxin]-disulfide + H2O = L-methionyl-(R)-S-oxide-[protein] + [thioredoxin]-dithiol. In terms of biological role, catalyzes the reduction of methionine sulfoxide (MetSO) to methionine in proteins. Specifically reduces the MetSO R-enantiomer. Plays a protective role against oxidative stress by restoring activity to proteins that have been inactivated by methionine oxidation. May play an essential function in association with MSRB2 in maintaining vegetative growth during environmental constraints, through the preservation of photosynthetic antennae. MSRB1 and MSRB2 account for most of the leaf peptide MSR capacity. This Arabidopsis thaliana (Mouse-ear cress) protein is Peptide methionine sulfoxide reductase B1, chloroplastic.